A 255-amino-acid polypeptide reads, in one-letter code: Lactose phosphotransferase system repressor (255 aa).

Positions 3–58 (KKRRLEKILDMLKIDGTITIKEIIDELDISDMTARRDLDALEADGLLTRTHGGAQL) constitute an HTH deoR-type domain. Positions 20–39 (ITIKEIIDELDISDMTARRD) form a DNA-binding region, H-T-H motif.

Its function is as follows. Repressor of the lactose catabolism operon. Galactose-6-phosphate is the inducer. The chain is Lactose phosphotransferase system repressor (lacR) from Lactococcus lactis subsp. lactis (Streptococcus lactis).